We begin with the raw amino-acid sequence, 692 residues long: Elongation factor G (692 aa).

The tr-type G domain occupies 8–282; sequence AKTRNIGIMA…AVIAYLPSPL (275 aa). Residues 17–24, 81–85, and 135–138 contribute to the GTP site; these read AHVDAGKT, DTPGH, and NKMD.

It belongs to the TRAFAC class translation factor GTPase superfamily. Classic translation factor GTPase family. EF-G/EF-2 subfamily.

Its subcellular location is the cytoplasm. Functionally, catalyzes the GTP-dependent ribosomal translocation step during translation elongation. During this step, the ribosome changes from the pre-translocational (PRE) to the post-translocational (POST) state as the newly formed A-site-bound peptidyl-tRNA and P-site-bound deacylated tRNA move to the P and E sites, respectively. Catalyzes the coordinated movement of the two tRNA molecules, the mRNA and conformational changes in the ribosome. This chain is Elongation factor G, found in Streptococcus equi subsp. equi (strain 4047).